A 1135-amino-acid chain; its full sequence is MSSLSRELVFLILQFLDEEKFKDTVHRLEKESGFFFNMRYFEDSVTAGEWDDVEKYLSGFTKVDDNRYSMKIFFEIRKQKYLEALDKKDHAKAVDILVKELKVFSTFNEELFKEITMLLTLTNFRENEQLSKYGDTKSARGIMLGELKKLIEANPLFRDKLQFPSLKNSRLRTLINQSLNWQHQLCKNPRPNPDIKTLFVDHTCGHPNGAHTPSPTTNHLMGSVPKVGGFPPLGAHGPFQPTPAPLTTSLAGWMPNPSVQHPTVSAGPIGLGAPNSAVSMLKRERPRSPPTNSLSMDYQTADSESVLKRPRPFGISDGVNNLPVNVLPVTYPGQSHAHATYSTDDLPKNVSRILSQGSAIKSMDFHPVQQTMLLVGTNLGDIAIWEVGSREKLVSRSFKVWDLATCTVNLQASLASEYTAAVNRVVWSPDGGLLGVAYSKHIVHIYSYHGGEDLRNHLEIDAHAGNVNDLAFSQPNQQLCVVTCGEDKTIKVWDAVTGNKLHTFEGHEAPVYSVCPHQKENIQFIFSTAVDGKIKAWLYDNMGSRVDYDAPGRSCTSMAYCADGTRLFSCGTSKEGESFIVEWNESEGAVKRTYLGLGKRSVGVVQFDTMKNKFLVAGDEFQVKFWDMDSVDLLSSTAAEGGLPSSPCLRINKEGTLLAVSTTDNGIKILANAEGSRILHSMANRGLDSSRAPPGSVAKGPIVGTFGTPNSSTGMSLSMGERSGPVASVTGLNGDNRSLPDVKPRIADDAEKSKTWKLTEISERSQLRTLRLPDTLLPARVVKLIYTNSGGAILALAENAAHKLWKWQKSERNLLGKANSNVPPQLWQPSSGVLMTNDTREGNKEDVVPCFALSKNDSYVMSASGGKISLFNMMTFKTMTTFMAPPPAATSLAFHPQDNNIIAIGMDDSSIQIYNVRVDEVKSKLKGHQKRVTGLAFSNVLNVLVSSGADSQLCVWSMDGWEKQASKQIQIPSGHSPNPLAHTRVQFHQDQIHVLVVHASQLAIYEAPKLENMKQWIPKESSGSVTDAVYSCDSQSIYAAFDDGSVSILTATTLQLKCRIGPNSYLPSNPSSRVYPATVAAHPSEPNQFAVGLTDGGVHVIEPPGPEGKWGISAPPENGAGPSVSSAPGSDQQPR.

The LisH domain occupies 4 to 36; sequence LSRELVFLILQFLDEEKFKDTVHRLEKESGFFF. Residues 34–92 enclose the CTLH domain; sequence FFFNMRYFEDSVTAGEWDDVEKYLSGFTKVDDNRYSMKIFFEIRKQKYLEALDKKDHAK. Position 214 is a phosphoserine (Ser214). The interval 281-303 is disordered; sequence LKRERPRSPPTNSLSMDYQTADS. Positions 290-303 are enriched in polar residues; the sequence is PTNSLSMDYQTADS. WD repeat units lie at residues 355–395, 417–456, 462–503, 506–547, 550–593, 597–636, 638–680, 776–815, 843–881, 884–924, 927–966, and 1020–1059; these read SQGS…KLVS, EYTAAVNRVVWSPDGGLLGVAYSKHIVHIYSYHGGEDLRN, AHAG…KLHT, GHEA…SRVD, APGR…VKRT, LGKRSVGVVQFDTMKNKFLVAGDEFQVKFWDMDSVDLLSS, AAEG…RILH, LLPARVVKLIYTNSGGAILALAENAAHKLWKWQKSERNLL, NKEDVVPCFALSKNDSYVMSASGGKISLFNMMTFKTMTT, APPP…VKSK, GHQKRVTGLAFSNVLNVLVSSGADSQLCVWSMDGWEKQAS, and ESSGSVTDAVYSCDSQSIYAAFDDGSVSILTATTLQLKCR. The tract at residues 1095-1135 is disordered; the sequence is DGGVHVIEPPGPEGKWGISAPPENGAGPSVSSAPGSDQQPR. The segment covering 1119–1135 has biased composition (low complexity); the sequence is GAGPSVSSAPGSDQQPR.

As to quaternary structure, tetramer. Interacts with WUS (via the C-terminal domain). Interacts with SPL (via EAR motif). Interacts with SPEAR3/TIE1. Binds to and corepresses GAF1/IDD2 at the promoter of GA20OX2 gene.

It localises to the nucleus. Transcription corepressor of Zinc finger transcription factors GAF1/IDD2 and ENY/IDD1 in regulation of gibberellin homeostasis and signaling. The sequence is that of Topless-related protein 4 (TPR4) from Arabidopsis thaliana (Mouse-ear cress).